The sequence spans 492 residues: Dynein regulatory complex subunit 2 (492 aa).

Coiled coils occupy residues 16–95, 256–318, and 373–401; these read LTEE…FERV, VQSA…AAQA, and LSEE…HDYS.

The protein belongs to the DRC2 family. In terms of assembly, component of the nexin-dynein regulatory complex (N-DRC).

It is found in the cytoplasm. The protein localises to the cytoskeleton. Its subcellular location is the flagellum basal body. It localises to the cell projection. The protein resides in the cilium. It is found in the flagellum. The protein localises to the flagellum axoneme. In terms of biological role, component of the nexin-dynein regulatory complex (N-DRC), a key regulator of ciliary/flagellar motility which maintains the alignment and integrity of the distal axoneme and regulates microtubule sliding in motile axonemes. Plays a critical role in the assembly of N-DRC and also stabilizes the assembly of multiple inner dynein arms and radial spokes. Coassembles with DRC1 to form a central scaffold needed for assembly of the N-DRC and its attachment to the outer doublet microtubules. This chain is Dynein regulatory complex subunit 2 (ccdc65), found in Danio rerio (Zebrafish).